A 233-amino-acid polypeptide reads, in one-letter code: Ribose-5-phosphate isomerase A (233 aa).

Substrate is bound by residues 28-31 (TGST), 85-88 (DGAD), and 98-101 (KGLG). Glu-107 serves as the catalytic Proton acceptor. A substrate-binding site is contributed by Lys-125.

It belongs to the ribose 5-phosphate isomerase family. In terms of assembly, homodimer.

It catalyses the reaction aldehydo-D-ribose 5-phosphate = D-ribulose 5-phosphate. It functions in the pathway carbohydrate degradation; pentose phosphate pathway; D-ribose 5-phosphate from D-ribulose 5-phosphate (non-oxidative stage): step 1/1. In terms of biological role, catalyzes the reversible conversion of ribose-5-phosphate to ribulose 5-phosphate. The protein is Ribose-5-phosphate isomerase A of Roseiflexus sp. (strain RS-1).